A 312-amino-acid chain; its full sequence is Very-long-chain 3-oxoacyl-CoA reductase (312 aa).

Transmembrane regions (helical) follow at residues 33–53 (VWGIGAGRAALGPGLGAWAVV), 181–201 (GVILNISSAAGMYPTPLLTLY), and 274–294 (HAFMGWVFSILPTSTVMNLLM). 48 to 77 (GAWAVVTGATDGIGKAYAKELAKRGMKVAL) serves as a coordination point for NADP(+). Serine 188 serves as a coordination point for substrate. Tyrosine 201 serves as the catalytic Proton acceptor.

The protein belongs to the short-chain dehydrogenases/reductases (SDR) family. 17-beta-HSD 3 subfamily. In terms of tissue distribution, brain.

It localises to the endoplasmic reticulum membrane. The enzyme catalyses a very-long-chain (3R)-3-hydroxyacyl-CoA + NADP(+) = a very-long-chain 3-oxoacyl-CoA + NADPH + H(+). It carries out the reaction 17beta-estradiol + NAD(+) = estrone + NADH + H(+). The catalysed reaction is 17beta-estradiol + NADP(+) = estrone + NADPH + H(+). It catalyses the reaction 3-oxooctadecanoyl-CoA + NADPH + H(+) = (3R)-hydroxyoctadecanoyl-CoA + NADP(+). The enzyme catalyses (7Z,10Z,13Z,16Z)-3-oxodocosatetraenoyl-CoA + NADPH + H(+) = (3R)-hydroxy-(7Z,10Z,13Z,16Z)-docosatetraenoyl-CoA + NADP(+). It carries out the reaction 3-oxo-(7Z,10Z,13Z,16Z,19Z)-docosapentaenoyl-CoA + NADPH + H(+) = (3R)-hydroxy-(7Z,10Z,13Z,16Z,19Z)-docosapentaenoyl-CoA + NADP(+). The catalysed reaction is (8Z,11Z,14Z)-3-oxoeicosatrienoyl-CoA + NADPH + H(+) = (3R)-hydroxy-(8Z,11Z,14Z)-eicosatrienoyl-CoA + NADP(+). Its pathway is lipid metabolism; fatty acid biosynthesis. It participates in steroid biosynthesis; estrogen biosynthesis. In terms of biological role, catalyzes the second of the four reactions of the long-chain fatty acids elongation cycle. This endoplasmic reticulum-bound enzymatic process, allows the addition of two carbons to the chain of long- and very long-chain fatty acids/VLCFAs per cycle. This enzyme has a 3-ketoacyl-CoA reductase activity, reducing 3-ketoacyl-CoA to 3-hydroxyacyl-CoA, within each cycle of fatty acid elongation. Thereby, it may participate in the production of VLCFAs of different chain lengths that are involved in multiple biological processes as precursors of membrane lipids and lipid mediators. May also catalyze the transformation of estrone (E1) into estradiol (E2) and play a role in estrogen formation. In Anas platyrhynchos (Mallard), this protein is Very-long-chain 3-oxoacyl-CoA reductase (HSD17B12).